The sequence spans 189 residues: Glycerol-3-phosphate acyltransferase 1 (189 aa).

The next 5 membrane-spanning stretches (helical) occupy residues 12-32, 61-81, 88-108, 124-144, and 164-184; these read MQFL…AYIV, GYFV…VSIA, FTFV…PMLF, IAFD…FYLI, and ILYS…VLIL.

The protein belongs to the PlsY family. In terms of assembly, probably interacts with PlsX.

It localises to the cell membrane. The enzyme catalyses an acyl phosphate + sn-glycerol 3-phosphate = a 1-acyl-sn-glycero-3-phosphate + phosphate. The protein operates within lipid metabolism; phospholipid metabolism. Catalyzes the transfer of an acyl group from acyl-phosphate (acyl-PO(4)) to glycerol-3-phosphate (G3P) to form lysophosphatidic acid (LPA). This enzyme utilizes acyl-phosphate as fatty acyl donor, but not acyl-CoA or acyl-ACP. The chain is Glycerol-3-phosphate acyltransferase 1 from Bacillus anthracis.